Reading from the N-terminus, the 232-residue chain is Lipoprotein-releasing system ATP-binding protein LolD 1 (232 aa).

Positions 11–231 (VYLHDVKRQY…SIQDGLVVEL (221 aa)) constitute an ABC transporter domain. Residue 47–54 (APSGAGKS) participates in ATP binding.

It belongs to the ABC transporter superfamily. Lipoprotein translocase (TC 3.A.1.125) family. As to quaternary structure, the complex is composed of two ATP-binding proteins (LolD) and two transmembrane proteins (LolC and LolE).

The protein localises to the cell inner membrane. Its function is as follows. Part of the ABC transporter complex LolCDE involved in the translocation of mature outer membrane-directed lipoproteins, from the inner membrane to the periplasmic chaperone, LolA. Responsible for the formation of the LolA-lipoprotein complex in an ATP-dependent manner. This is Lipoprotein-releasing system ATP-binding protein LolD 1 from Rhodopseudomonas palustris (strain BisB18).